The sequence spans 621 residues: Membrane protein insertase YidC (621 aa).

6 consecutive transmembrane segments (helical) span residues 1-21 (MDKNTLVGFALIGAVVIGFSI), 363-383 (GWGLSMGVVLLLMTIIVKVLV), 436-456 (MGGCLPMLIQMPVFMALFFFV), 486-506 (IPLLGNHLSLFCLLFSITNIL), 527-547 (LMMYIMPVMFIFIFNGYSSGL), and 549-569 (YYYFISGLIGILTMVILRKTT).

This sequence belongs to the OXA1/ALB3/YidC family. Type 1 subfamily. In terms of assembly, interacts with the Sec translocase complex via SecD. Specifically interacts with transmembrane segments of nascent integral membrane proteins during membrane integration.

The protein localises to the cell inner membrane. Required for the insertion and/or proper folding and/or complex formation of integral membrane proteins into the membrane. Involved in integration of membrane proteins that insert both dependently and independently of the Sec translocase complex, as well as at least some lipoproteins. Aids folding of multispanning membrane proteins. This is Membrane protein insertase YidC from Phocaeicola vulgatus (strain ATCC 8482 / DSM 1447 / JCM 5826 / CCUG 4940 / NBRC 14291 / NCTC 11154) (Bacteroides vulgatus).